Here is a 184-residue protein sequence, read N- to C-terminus: Shikimate kinase (184 aa).

Position 15–20 (15–20) interacts with ATP; sequence GAGKTS. Mg(2+) is bound at residue T19. D37, R61, and G83 together coordinate substrate. R123 contacts ATP. R142 is a substrate binding site.

The protein belongs to the shikimate kinase family. As to quaternary structure, monomer. Requires Mg(2+) as cofactor.

It is found in the cytoplasm. It catalyses the reaction shikimate + ATP = 3-phosphoshikimate + ADP + H(+). Its pathway is metabolic intermediate biosynthesis; chorismate biosynthesis; chorismate from D-erythrose 4-phosphate and phosphoenolpyruvate: step 5/7. In terms of biological role, catalyzes the specific phosphorylation of the 3-hydroxyl group of shikimic acid using ATP as a cosubstrate. The protein is Shikimate kinase of Coxiella burnetii (strain CbuK_Q154) (Coxiella burnetii (strain Q154)).